The chain runs to 135 residues: ATP synthase epsilon chain (135 aa).

Belongs to the ATPase epsilon chain family. As to quaternary structure, F-type ATPases have 2 components, CF(1) - the catalytic core - and CF(0) - the membrane proton channel. CF(1) has five subunits: alpha(3), beta(3), gamma(1), delta(1), epsilon(1). CF(0) has three main subunits: a, b and c.

The protein localises to the cellular thylakoid membrane. Produces ATP from ADP in the presence of a proton gradient across the membrane. This chain is ATP synthase epsilon chain, found in Prochlorococcus marinus (strain NATL1A).